The primary structure comprises 875 residues: Valine--tRNA ligase (875 aa).

The short motif at 41–51 (PNVTGSLHMGH) is the 'HIGH' region element. Positions 525-529 (KMSKS) match the 'KMSKS' region motif. Lys528 lines the ATP pocket. The stretch at 810-875 (VDLELIKKNL…ERISITIKGL (66 aa)) forms a coiled coil.

Belongs to the class-I aminoacyl-tRNA synthetase family. ValS type 1 subfamily. Monomer.

Its subcellular location is the cytoplasm. It catalyses the reaction tRNA(Val) + L-valine + ATP = L-valyl-tRNA(Val) + AMP + diphosphate. In terms of biological role, catalyzes the attachment of valine to tRNA(Val). As ValRS can inadvertently accommodate and process structurally similar amino acids such as threonine, to avoid such errors, it has a 'posttransfer' editing activity that hydrolyzes mischarged Thr-tRNA(Val) in a tRNA-dependent manner. The polypeptide is Valine--tRNA ligase (Pelagibacter ubique (strain HTCC1062)).